We begin with the raw amino-acid sequence, 787 residues long: ER degradation-enhancing alpha-mannosidase-like protein 1 (787 aa).

The signal sequence occupies residues 1–22 (MGSLHSIFCVCLILLCIFKENS). 5 N-linked (GlcNAc...) asparagine glycosylation sites follow: N479, N609, N670, N693, and N756.

This sequence belongs to the glycosyl hydrolase 47 family.

The protein resides in the endoplasmic reticulum lumen. Its function is as follows. Alpha-mannosidase-like protein involved in endoplasmic reticulum-associated degradation (ERAD). Delivers misfolded glycoproteins to proteasomes. It lacks mannosidase activity. In Schizosaccharomyces pombe (strain 972 / ATCC 24843) (Fission yeast), this protein is ER degradation-enhancing alpha-mannosidase-like protein 1 (mnl1).